A 249-amino-acid chain; its full sequence is MKLSAEGTVMASSEEAAQLSCDTSSSHARNSKEQDFQPTQQIGSPTALGMGAFAIAFTTLSMSLMEWRSAAITNAYIGNCFFTAGMGLVLVAQWELVRGNSFGHTVFGGFGLFNLAFGAINAPAFGVADAFKDDPAALNNAIGYFLLVWGIFVLFFTVAAMPMNLVYTGMLGTSQITYTLLAASYFSFADDHASAGLALKKAAGAFGFVSGLFAWYTVGHLMCQDALLFSFPLGDTSPLYARLQRKKRH.

The next 6 helical transmembrane spans lie at 42-62 (IGSP…TLSM), 71-91 (AITN…LVLV), 106-126 (VFGG…PAFG), 141-161 (AIGY…VAAM), 169-189 (GMLG…FSFA), and 202-222 (AAGA…GHLM).

This sequence belongs to the acetate uptake transporter (AceTr) (TC 2.A.96) family.

Its subcellular location is the endoplasmic reticulum membrane. It functions in the pathway mycotoxin biosynthesis; patulin biosynthesis. Its function is as follows. Acetate transporter protein; part of the gene cluster that mediates the biosynthesis of patulin, an acetate-derived tetraketide mycotoxin produced by several fungal species that shows antimicrobial properties against several bacteria. May be involved in the uptake of acetate, a substrate for the synthesis of 6-methylsalicylic acid by the polyketide synthase patK. In Penicillium expansum (Blue mold rot fungus), this protein is Acetate transporter protein patA.